The primary structure comprises 252 residues: MQICLMDETGATDGALSVLAARWGLEHDEDNPMALVLTPQHLELRKRDEPKLGGIFVDFVGGAMAHRRKFGGGRGEAVAKAVGIKGDYLPDVVDATAGLGRDAFVLASVGCRVRMLERNPVVAALLDDGLTRGYADADIGGWLQERLQLIHASSLTALTDITPRPQVVYLDPMFPHRQKSALVKKEMRVFQSLVGPDLDADGLLEPARQLATKRVVVKRPDYAPPLADVATPNAIVTKEHRFDIYAGTPLTE.

Residues 101 to 102, 117 to 118, 153 to 154, and aspartate 171 contribute to the S-adenosyl-L-methionine site; these read RD, ER, and SS.

This sequence belongs to the methyltransferase superfamily. RsmJ family.

Its subcellular location is the cytoplasm. The enzyme catalyses guanosine(1516) in 16S rRNA + S-adenosyl-L-methionine = N(2)-methylguanosine(1516) in 16S rRNA + S-adenosyl-L-homocysteine + H(+). In terms of biological role, specifically methylates the guanosine in position 1516 of 16S rRNA. This Salmonella typhi protein is Ribosomal RNA small subunit methyltransferase J.